The chain runs to 229 residues: Mannose-specific lectin TAR1 (229 aa).

An N-terminal signal peptide occupies residues 1 to 23 (MAKLLLFLLPAILGLLIPRSAVA). Bulb-type lectin domains lie at 26 to 131 (TNYL…PWVP) and 145 to 229 (DNLL…DYVL). Beta-D-mannose is bound by residues 51-55 (QNDCN), Tyr-59, Trp-63, Gln-64, 170-174 (QGDCN), Tyr-178, and 182-185 (YGWQ). A Carbohydrate-binding motif 1 motif is present at residues 51-59 (QNDCNLVLY). 2 cysteine pairs are disulfide-bonded: Cys-54–Cys-74 and Cys-173–Cys-195. A Carbohydrate-binding motif 2 motif is present at residues 170–178 (QGDCNLVLY).

Forms heterotetramer of 2 chains 1 and 2 chains 2 arranged as a dimer of chain 1 and chain 2 heterodimers.

It localises to the secreted. Its function is as follows. Mannose-specific lectin. Shows agglutinating activity towards erythrocytes from rabbit. This Colocasia esculenta (Wild taro) protein is Mannose-specific lectin TAR1.